A 339-amino-acid polypeptide reads, in one-letter code: D-alanine--D-alanine ligase (339 aa).

An ATP-grasp domain is found at 115 to 327; that stretch reads KHIFRSLGID…FNELVKIIIE (213 aa). Residue 142–211 coordinates ATP; that stretch reads KIDYPYVLKP…EEYIPGIELH (70 aa). Residues aspartate 279, glutamate 293, and asparagine 295 each contribute to the Mg(2+) site.

It belongs to the D-alanine--D-alanine ligase family. Mg(2+) is required as a cofactor. The cofactor is Mn(2+).

It localises to the cytoplasm. It carries out the reaction 2 D-alanine + ATP = D-alanyl-D-alanine + ADP + phosphate + H(+). It functions in the pathway cell wall biogenesis; peptidoglycan biosynthesis. Functionally, cell wall formation. In Wolbachia sp. subsp. Brugia malayi (strain TRS), this protein is D-alanine--D-alanine ligase.